The primary structure comprises 222 residues: PLASMODESMATA CALLOSE-BINDING PROTEIN 4 (222 aa).

The signal sequence occupies residues 1-19 (MSVLLPLCLIISMFTYSNA). Cysteine 22 and cysteine 83 are joined by a disulfide. Positions 88–187 (AASPSTTPPS…SVFPGTTLGP (100 aa)) are enriched in low complexity. Residues 88–199 (AASPSTTPPS…SGGLGDPNAG (112 aa)) are disordered. Residue asparagine 197 is the site of GPI-anchor amidated asparagine attachment. The propeptide at 198-222 (AGEKLSVRTNTVVFLLTGVAAMLVI) is removed in mature form.

Contains two additional disulfide bonds.

The protein localises to the cell membrane. Its subcellular location is the cell junction. It localises to the plasmodesma. The protein is PLASMODESMATA CALLOSE-BINDING PROTEIN 4 (PDCB4) of Arabidopsis thaliana (Mouse-ear cress).